A 118-amino-acid polypeptide reads, in one-letter code: Small ribosomal subunit protein uS13 (118 aa).

The interval 93-118 is disordered; the sequence is RGLPVRGQRTKTNARTRKGPRKPIRK.

This sequence belongs to the universal ribosomal protein uS13 family. As to quaternary structure, part of the 30S ribosomal subunit. Forms a loose heterodimer with protein S19. Forms two bridges to the 50S subunit in the 70S ribosome.

Its function is as follows. Located at the top of the head of the 30S subunit, it contacts several helices of the 16S rRNA. In the 70S ribosome it contacts the 23S rRNA (bridge B1a) and protein L5 of the 50S subunit (bridge B1b), connecting the 2 subunits; these bridges are implicated in subunit movement. Contacts the tRNAs in the A and P-sites. The chain is Small ribosomal subunit protein uS13 from Pseudomonas syringae pv. tomato (strain ATCC BAA-871 / DC3000).